Reading from the N-terminus, the 442-residue chain is MSEMTPREIVHELDAHIIGQKKAKRSVAVALRNRWRRMQLDADFRQEVTPKNILMIGPTGVGKTEIARRLAKLANAPFIKVEATKFTEVGYVGKEVEQIIRDLTDIAIKLTREQQMGKCRQRAEEHAEERILDALLPKPKNDWDSTDSDANSNTRQIFRKKLREGQLDDKEIDIDVAQPQVGIEIMSPPGMEEMTNQLQSLFKNMGQAPAKRRKMKIKEAFKLLIEEEAAKLVNQEDLKEQAIELVEQHGIVFLDEIDKICKRGETSGPDVSREGVQRDLLPLVEGCTVTTKHGMVKTDHILFIASGAFQMAKPSDLIPELQGRLPIRVELDALSADDFKRILTEPHASLTEQYIALMATEGVTIEFAESGIESIAKAAWQVNERTENIGARRLHTVMEKLMEDISYEASDKSGSSFVIDADYVSAHLDNLVQDEDLSRFIL.

ATP is bound by residues Ile18 and 60-65 (GVGKTE). Residues 136 to 156 (LPKPKNDWDSTDSDANSNTRQ) are disordered. 3 residues coordinate ATP: Asp255, Glu320, and Arg392.

It belongs to the ClpX chaperone family. HslU subfamily. In terms of assembly, a double ring-shaped homohexamer of HslV is capped on each side by a ring-shaped HslU homohexamer. The assembly of the HslU/HslV complex is dependent on binding of ATP.

It is found in the cytoplasm. Its function is as follows. ATPase subunit of a proteasome-like degradation complex; this subunit has chaperone activity. The binding of ATP and its subsequent hydrolysis by HslU are essential for unfolding of protein substrates subsequently hydrolyzed by HslV. HslU recognizes the N-terminal part of its protein substrates and unfolds these before they are guided to HslV for hydrolysis. The protein is ATP-dependent protease ATPase subunit HslU of Shewanella sp. (strain MR-7).